The following is a 256-amino-acid chain: 5-keto-4-deoxy-D-glucarate aldolase (256 aa).

His50 acts as the Proton acceptor in catalysis. Gln151 is a substrate binding site. Residue Glu153 coordinates Mg(2+). Substrate contacts are provided by Ser178 and Asp179. Asp179 contacts Mg(2+).

This sequence belongs to the HpcH/HpaI aldolase family. KDGluc aldolase subfamily. In terms of assembly, homohexamer; trimer of dimers. Mg(2+) serves as cofactor.

It catalyses the reaction 5-dehydro-4-deoxy-D-glucarate = 2-hydroxy-3-oxopropanoate + pyruvate. The catalysed reaction is 2-dehydro-3-deoxy-D-glucarate = 2-hydroxy-3-oxopropanoate + pyruvate. It participates in carbohydrate acid metabolism; galactarate degradation; D-glycerate from galactarate: step 2/3. In terms of biological role, catalyzes the reversible retro-aldol cleavage of both 5-keto-4-deoxy-D-glucarate and 2-keto-3-deoxy-D-glucarate to pyruvate and tartronic semialdehyde. The polypeptide is 5-keto-4-deoxy-D-glucarate aldolase (Klebsiella pneumoniae subsp. pneumoniae (strain ATCC 700721 / MGH 78578)).